Here is an 813-residue protein sequence, read N- to C-terminus: Probable E3 ubiquitin-protein ligase hulA (813 aa).

The C2 domain maps to 1 to 109 (MGSNLPAQPN…QMGGDEMLTR (109 aa)). Disordered stretches follow at residues 131 to 235 (NLST…GWER) and 251 to 351 (RTTT…YFVD). The span at 148–167 (VQSSTSSGLVPQVAPSSSHP) shows a compositional bias: polar residues. A compositionally biased stretch (low complexity) spans 188-215 (RVPSTTRPSSTAAPASAAGAAVSNSHGS). One can recognise a WW 1 domain in the interval 227–260 (GRLPAGWERREDNLGRTYYVDHNTRTTTWTRPSS). Residues 251–264 (RTTTWTRPSSNYNE) show a composition bias toward polar residues. A compositionally biased stretch (basic and acidic residues) spans 265 to 292 (HAQRSQREANMQLERRAHQSRMLPEDRT). The segment covering 293–307 (GANSPNLPESSQQAH) has biased composition (polar residues). The segment covering 322–331 (ATGATTAGTG) has biased composition (low complexity). 2 consecutive WW domains span residues 331–364 (GELP…DPRR) and 391–424 (GPLP…DPRL). The HECT domain maps to 480 to 813 (SASDLKKRLM…VEETLGFGQE (334 aa)). Cys-781 functions as the Glycyl thioester intermediate in the catalytic mechanism.

It belongs to the RSP5/NEDD4 family. In terms of assembly, interacts with creD.

It is found in the cytoplasm. The enzyme catalyses S-ubiquitinyl-[E2 ubiquitin-conjugating enzyme]-L-cysteine + [acceptor protein]-L-lysine = [E2 ubiquitin-conjugating enzyme]-L-cysteine + N(6)-ubiquitinyl-[acceptor protein]-L-lysine.. It participates in protein modification; protein ubiquitination. Its function is as follows. E3 ubiquitin-protein ligase which accepts ubiquitin from an E2 ubiquitin-conjugating enzyme in the form of a thioester and then directly transfers the ubiquitin to targeted substrates. Probably involved in the regulatory network controlling carbon source utilization. This chain is Probable E3 ubiquitin-protein ligase hulA (hulA), found in Aspergillus fumigatus (strain CBS 144.89 / FGSC A1163 / CEA10) (Neosartorya fumigata).